The primary structure comprises 185 residues: ATP synthase subunit b 2 (185 aa).

Residues 1-25 (MAESHGNAHGATAHTEADGGHKAPF) are disordered. A helical transmembrane segment spans residues 34–56 (ASQLVSLTIAFVALYLISSRLAL).

It belongs to the ATPase B chain family. F-type ATPases have 2 components, F(1) - the catalytic core - and F(0) - the membrane proton channel. F(1) has five subunits: alpha(3), beta(3), gamma(1), delta(1), epsilon(1). F(0) has three main subunits: a(1), b(2) and c(10-14). The alpha and beta chains form an alternating ring which encloses part of the gamma chain. F(1) is attached to F(0) by a central stalk formed by the gamma and epsilon chains, while a peripheral stalk is formed by the delta and b chains.

Its subcellular location is the cell inner membrane. Functionally, f(1)F(0) ATP synthase produces ATP from ADP in the presence of a proton or sodium gradient. F-type ATPases consist of two structural domains, F(1) containing the extramembraneous catalytic core and F(0) containing the membrane proton channel, linked together by a central stalk and a peripheral stalk. During catalysis, ATP synthesis in the catalytic domain of F(1) is coupled via a rotary mechanism of the central stalk subunits to proton translocation. Component of the F(0) channel, it forms part of the peripheral stalk, linking F(1) to F(0). The b'-subunit is a diverged and duplicated form of b found in plants and photosynthetic bacteria. The protein is ATP synthase subunit b 2 (atpF2) of Nitrobacter winogradskyi (strain ATCC 25391 / DSM 10237 / CIP 104748 / NCIMB 11846 / Nb-255).